Here is a 191-residue protein sequence, read N- to C-terminus: MDPNTPADFFKGSSKFHTYYSQTKKGGGVIDLGLSLRTIQHETYLPPARMIGLDGYGELIDWSQPSYNSITQLKSEDTGHQRLAQGYYNNEGESRGKYAYVKVNLDGLVVGRKVCLVDQGAYATLALQLNDMFGMQTVSGLRLFQTESEFSLVYRDREGIWRNVGDVPWKEFVESVDRMRIARRNDALLPF.

The short motif at 32 to 36 is the EAR-like (transcriptional repression) element; the sequence is LGLSL. The 87-residue stretch at 98–184 folds into the PB1 domain; it reads YAYVKVNLDG…SVDRMRIARR (87 aa).

It belongs to the Aux/IAA family. In terms of assembly, homodimers and heterodimers.

Its subcellular location is the nucleus. Aux/IAA proteins are short-lived transcriptional factors that function as repressors of early auxin response genes at low auxin concentrations. Repression is thought to result from the interaction with auxin response factors (ARFs), proteins that bind to the auxin-responsive promoter element (AuxRE). Formation of heterodimers with ARF proteins may alter their ability to modulate early auxin response genes expression. This is Auxin-responsive protein IAA32 from Arabidopsis thaliana (Mouse-ear cress).